A 257-amino-acid chain; its full sequence is UPF0246 protein Mmc1_3117 (257 aa).

This sequence belongs to the UPF0246 family.

In Magnetococcus marinus (strain ATCC BAA-1437 / JCM 17883 / MC-1), this protein is UPF0246 protein Mmc1_3117.